The primary structure comprises 510 residues: tRNA(Ile)-lysidine synthase (510 aa).

32–37 (SGGLDS) is an ATP binding site.

Belongs to the tRNA(Ile)-lysidine synthase family.

The protein resides in the cytoplasm. It carries out the reaction cytidine(34) in tRNA(Ile2) + L-lysine + ATP = lysidine(34) in tRNA(Ile2) + AMP + diphosphate + H(+). In terms of biological role, ligates lysine onto the cytidine present at position 34 of the AUA codon-specific tRNA(Ile) that contains the anticodon CAU, in an ATP-dependent manner. Cytidine is converted to lysidine, thus changing the amino acid specificity of the tRNA from methionine to isoleucine. This is tRNA(Ile)-lysidine synthase from Blochmanniella pennsylvanica (strain BPEN).